A 73-amino-acid chain; its full sequence is DNA-directed RNA polymerase subunit epsilon (73 aa).

Belongs to the RNA polymerase subunit epsilon family. RNAP is composed of a core of 2 alpha, a beta and a beta' subunit. The core is associated with a delta subunit, and at least one of epsilon or omega. When a sigma factor is associated with the core the holoenzyme is formed, which can initiate transcription.

The catalysed reaction is RNA(n) + a ribonucleoside 5'-triphosphate = RNA(n+1) + diphosphate. Functionally, a non-essential component of RNA polymerase (RNAP). This is DNA-directed RNA polymerase subunit epsilon from Lactobacillus helveticus (strain DPC 4571).